A 451-amino-acid polypeptide reads, in one-letter code: Tubulin alpha chain (451 aa).

Residue Gln11 participates in GTP binding. Lys40 is subject to N6-acetyllysine. GTP contacts are provided by Glu71, Gly144, Thr145, Thr179, Asn206, and Asn228. Glu71 contributes to the Mg(2+) binding site. The active site involves Glu254. Positions 432 to 451 (YEEVGAESAEGDDEDEGEDY) are disordered.

The protein belongs to the tubulin family. As to quaternary structure, dimer of alpha and beta chains. A typical microtubule is a hollow water-filled tube with an outer diameter of 25 nm and an inner diameter of 15 nM. Alpha-beta heterodimers associate head-to-tail to form protofilaments running lengthwise along the microtubule wall with the beta-tubulin subunit facing the microtubule plus end conferring a structural polarity. Microtubules usually have 13 protofilaments but different protofilament numbers can be found in some organisms and specialized cells. Requires Mg(2+) as cofactor. Undergoes a tyrosination/detyrosination cycle, the cyclic removal and re-addition of a C-terminal tyrosine residue by the enzymes tubulin tyrosine carboxypeptidase (TTCP) and tubulin tyrosine ligase (TTL), respectively. In terms of processing, acetylation of alpha chains at Lys-40 stabilizes microtubules and affects affinity and processivity of microtubule motors. This modification has a role in multiple cellular functions, ranging from cell motility, cell cycle progression or cell differentiation to intracellular trafficking and signaling.

The protein localises to the cytoplasm. The protein resides in the cytoskeleton. It carries out the reaction GTP + H2O = GDP + phosphate + H(+). In terms of biological role, tubulin is the major constituent of microtubules, a cylinder consisting of laterally associated linear protofilaments composed of alpha- and beta-tubulin heterodimers. Microtubules grow by the addition of GTP-tubulin dimers to the microtubule end, where a stabilizing cap forms. Below the cap, tubulin dimers are in GDP-bound state, owing to GTPase activity of alpha-tubulin. This Daucus carota (Wild carrot) protein is Tubulin alpha chain (TBA).